The sequence spans 111 residues: WAP four-disulfide core domain protein 12 (111 aa).

The first 23 residues, 1 to 23 (MGSSSFLVLMVSLTLVTLVAAEG), serve as a signal peptide directing secretion. The WAP domain occupies 27–74 (GIEKAGVCPADNVRCFKSDPPQCHTDQDCLGERKCCYLHCGFKCVIPV). 4 disulfides stabilise this stretch: C34–C62, C41–C66, C49–C61, and C55–C70. The tract at residues 80–111 (GGNKDEDVSGPCPEPGWEAKSPGSSSTGCPQK) is disordered. The span at 101 to 111 (PGSSSTGCPQK) shows a compositional bias: polar residues.

It localises to the secreted. In terms of biological role, antibacterial protein. Putative acid-stable proteinase inhibitor. The polypeptide is WAP four-disulfide core domain protein 12 (WFDC12) (Chlorocebus aethiops (Green monkey)).